The sequence spans 188 residues: MAIMSDKWIKEAVINQSMIKPFVEKQVRVHNKDKIISYGLSSYGYDARVSNEFKIFTNINSTTVDPKNFSEYNLVDREVDVCIIPPNSFALGRTIEYFKVPRDILVICVGKSTYARCGIIVNVTPLEPEWEGHVTLEFSNTTPLPAKIYANEGACQFLFLNSDQMCDTSYADRQGKYMKQVGVTLPLT.

DCTP is bound by residues 111–116 (KSTYAR), 135–137 (TLE), Gln156, Tyr170, Lys179, and Gln180. Catalysis depends on Glu137, which acts as the Proton donor/acceptor.

This sequence belongs to the dCTP deaminase family. As to quaternary structure, homotrimer.

It catalyses the reaction dCTP + H2O + H(+) = dUTP + NH4(+). It participates in pyrimidine metabolism; dUMP biosynthesis; dUMP from dCTP (dUTP route): step 1/2. Functionally, catalyzes the deamination of dCTP to dUTP. This chain is dCTP deaminase, found in Rickettsia canadensis (strain McKiel).